The sequence spans 278 residues: 4-deoxy-L-threo-5-hexosulose-uronate ketol-isomerase (278 aa).

4 residues coordinate Zn(2+): H196, H198, E203, and H245.

Belongs to the KduI family. As to quaternary structure, homohexamer. Zn(2+) is required as a cofactor.

The enzyme catalyses 5-dehydro-4-deoxy-D-glucuronate = 3-deoxy-D-glycero-2,5-hexodiulosonate. It functions in the pathway glycan metabolism; pectin degradation; 2-dehydro-3-deoxy-D-gluconate from pectin: step 4/5. Catalyzes the isomerization of 5-dehydro-4-deoxy-D-glucuronate to 3-deoxy-D-glycero-2,5-hexodiulosonate. This is 4-deoxy-L-threo-5-hexosulose-uronate ketol-isomerase from Escherichia coli O139:H28 (strain E24377A / ETEC).